A 500-amino-acid polypeptide reads, in one-letter code: Probable cytosol aminopeptidase (500 aa).

Mn(2+)-binding residues include Lys-269 and Asp-274. Residue Lys-281 is part of the active site. Residues Asp-292, Asp-351, and Glu-353 each coordinate Mn(2+). Arg-355 is an active-site residue.

Belongs to the peptidase M17 family. Mn(2+) is required as a cofactor.

The protein resides in the cytoplasm. The catalysed reaction is Release of an N-terminal amino acid, Xaa-|-Yaa-, in which Xaa is preferably Leu, but may be other amino acids including Pro although not Arg or Lys, and Yaa may be Pro. Amino acid amides and methyl esters are also readily hydrolyzed, but rates on arylamides are exceedingly low.. It carries out the reaction Release of an N-terminal amino acid, preferentially leucine, but not glutamic or aspartic acids.. Presumably involved in the processing and regular turnover of intracellular proteins. Catalyzes the removal of unsubstituted N-terminal amino acids from various peptides. This Acidithiobacillus ferrooxidans (strain ATCC 23270 / DSM 14882 / CIP 104768 / NCIMB 8455) (Ferrobacillus ferrooxidans (strain ATCC 23270)) protein is Probable cytosol aminopeptidase.